We begin with the raw amino-acid sequence, 714 residues long: Palmitoyltransferase ZDHHC5 (714 aa).

The Cytoplasmic portion of the chain corresponds to 1–13; sequence MPAESAKRFKPSK. Residues 14–34 form a helical membrane-spanning segment; the sequence is YVPVSAAAIFLVGATTLFFAF. The Extracellular segment spans residues 35–52; it reads TCPGLSLSVSPAVPVYNA. A helical membrane pass occupies residues 53-73; the sequence is VVFLFVLANFSMATFMDPGVF. Residues 74 to 148 are Cytoplasmic-facing; that stretch reads PRAEEDEDKE…NCIGRRNYRY (75 aa). Tyrosine 91 bears the Phosphotyrosine mark. Residues 104-154 form the DHHC domain; sequence KWCATCRFYRPPRCSHCSVCDNCVEEFDHHCPWVNNCIGRRNYRYFFLFLL. Cysteine 134 serves as the catalytic S-palmitoyl cysteine intermediate. The helical transmembrane segment at 149–169 threads the bilayer; that stretch reads FFLFLLSLTAHITGVFGFGLL. Topologically, residues 170–191 are extracellular; the sequence is YVLYHMEELSGVRTAVTMAVMC. Residues 192-212 form a helical membrane-spanning segment; that stretch reads VAGLFFIPVAGLTGFHVVLVA. Residues 213 to 714 lie on the Cytoplasmic side of the membrane; that stretch reads RGRTTNEQVT…VGGTTYEISV (502 aa). Residue serine 247 is modified to Phosphoserine. The segment at 289–714 is disordered; that stretch reads GELRRTKSKG…VGGTTYEISV (426 aa). Phosphothreonine is present on threonine 294. A phosphoserine mark is found at serine 296 and serine 299. The residue at position 303 (threonine 303) is a Phosphothreonine. Serine 345 bears the Phosphoserine mark. Residues threonine 348 and threonine 350 each carry the phosphothreonine modification. Positions 359 to 373 are enriched in low complexity; that stretch reads SSSSASAAMPHSSSA. Phosphoserine occurs at positions 380, 398, 406, and 409. The span at 388–398 shows a compositional bias: polar residues; sequence AESSRQPSYRS. Phosphothreonine is present on threonine 411. Residues 422-432 show a composition bias toward low complexity; that stretch reads SSGSRSSSLKS. Serine 425, serine 429, and serine 432 each carry phosphoserine. Threonine 436 carries the post-translational modification Phosphothreonine. The span at 445–478 shows a compositional bias: polar residues; the sequence is SIRSEGTTSTSYKSLANQTRNGSLSYDSLLTPSD. A phosphoserine mark is found at serine 529 and serine 554. Arginine 616 carries the post-translational modification Omega-N-methylarginine. At serine 620 the chain carries Phosphoserine. Position 658 is a phosphothreonine (threonine 658). The span at 667-678 shows a compositional bias: polar residues; it reads TAYSKSNGQPKS. Residues 683-692 are compositionally biased toward pro residues; that stretch reads PPGPGQPPLS. Serine 693 is modified (phosphoserine). Position 696 is an omega-N-methylarginine (arginine 696).

This sequence belongs to the DHHC palmitoyltransferase family. ERF2/ZDHHC9 subfamily. Post-translationally, phosphorylation regulates association with endocytic proteins and its subcellular localization. Phosphorylation by LYN during fatty acid uptake leads to inactivation of the activity. Autopalmitoylated. Palmitoylation of the C-terminal tail regulates stimulation-dependent plasma membrane motility.

It localises to the cell membrane. The catalysed reaction is L-cysteinyl-[protein] + hexadecanoyl-CoA = S-hexadecanoyl-L-cysteinyl-[protein] + CoA. Palmitoyltransferase that catalyzes the addition of palmitate onto various protein substrates such as CTNND2, CD36, GSDMD, NLRP3, NOD1, NOD2, STAT3 and S1PR1 thus plays a role in various biological processes including cell adhesion, inflammation, fatty acid uptake, bacterial sensing or cardiac functions. Plays an important role in the regulation of synapse efficacy by mediating palmitoylation of delta-catenin/CTNND2, thereby increasing synaptic delivery and surface stabilization of alpha-amino-3-hydroxy-5-methyl-4-isoxazole propionic acid receptors (AMPARs). Under basal conditions, remains at the synaptic membrane through FYN-mediated phosphorylation that prevents association with endocytic proteins. Neuronal activity enhances the internalization and trafficking of DHHC5 from spines to dendritic shafts where it palmitoylates delta-catenin/CTNND2. Regulates cell adhesion at the plasma membrane by palmitoylating GOLGA7B and DSG2. Plays a role in innate immune response by mediating the palmitoylation of NOD1 and NOD2 and their proper recruitment to the bacterial entry site and phagosomes. Also participates in fatty acid uptake by palmitoylating CD36 and thereby targeting it to the plasma membrane. Upon binding of fatty acids to CD36, gets phosphorylated by LYN leading to inactivation and subsequent CD36 caveolar endocytosis. Controls oligodendrocyte development by catalyzing STAT3 palmitoylation. Acts as a regulator of inflammatory response by mediating palmitoylation of NLRP3 and GSDMD. Palmitoylates NLRP3 to promote inflammasome assembly and activation. Activates pyroptosis by catalyzing palmitoylation of gasdermin-D (GSDMD), thereby promoting membrane translocation and pore formation of GSDMD. The chain is Palmitoyltransferase ZDHHC5 (ZDHHC5) from Bos taurus (Bovine).